Consider the following 283-residue polypeptide: Pantothenate synthetase (283 aa).

Residue 30 to 37 (MGYLHEGH) coordinates ATP. The active-site Proton donor is His37. Residue Gln61 coordinates (R)-pantoate. Position 61 (Gln61) interacts with beta-alanine. Residue 147–150 (GQKD) participates in ATP binding. Gln153 serves as a coordination point for (R)-pantoate. Residues Val176 and 184–187 (MSSR) contribute to the ATP site.

This sequence belongs to the pantothenate synthetase family. In terms of assembly, homodimer.

It is found in the cytoplasm. The catalysed reaction is (R)-pantoate + beta-alanine + ATP = (R)-pantothenate + AMP + diphosphate + H(+). It functions in the pathway cofactor biosynthesis; (R)-pantothenate biosynthesis; (R)-pantothenate from (R)-pantoate and beta-alanine: step 1/1. Functionally, catalyzes the condensation of pantoate with beta-alanine in an ATP-dependent reaction via a pantoyl-adenylate intermediate. The protein is Pantothenate synthetase of Thermoanaerobacter pseudethanolicus (strain ATCC 33223 / 39E) (Clostridium thermohydrosulfuricum).